Here is a 260-residue protein sequence, read N- to C-terminus: Troponin I 3 (260 aa).

Positions 192–219 (DLDEIMAKKKGTADGKPEWSKKEKKEEE) are enriched in basic and acidic residues. The interval 192–260 (DLDEIMAKKK…EEEEEEEEEE (69 aa)) is disordered. Over residues 231-260 (PEAEPEPEAAEPAAEEPEAEEEEEEEEEEE) the composition is skewed to acidic residues.

It belongs to the troponin I family. Expressed in body wall muscle from first larval stage to adult. In adults expression is predominantly in vulval and anal muscles, body wall muscle expression is weaker. Also expressed in vulval muscles of hermaphrodites and the sex muscles of males.

Its function is as follows. Troponin I is the inhibitory subunit of troponin, the thin filament regulatory complex which confers calcium-sensitivity to muscle actomyosin ATPase activity. The sequence is that of Troponin I 3 (tni-3) from Caenorhabditis elegans.